The following is a 161-amino-acid chain: 2-C-methyl-D-erythritol 2,4-cyclodiphosphate synthase (161 aa).

Positions 13 and 15 each coordinate a divalent metal cation. Residues 13 to 15 (DAH) and 40 to 41 (HS) contribute to the 4-CDP-2-C-methyl-D-erythritol 2-phosphate site. Histidine 48 is a binding site for a divalent metal cation. 62–64 (DIG) provides a ligand contact to 4-CDP-2-C-methyl-D-erythritol 2-phosphate.

The protein belongs to the IspF family. As to quaternary structure, homotrimer. The cofactor is a divalent metal cation.

It carries out the reaction 4-CDP-2-C-methyl-D-erythritol 2-phosphate = 2-C-methyl-D-erythritol 2,4-cyclic diphosphate + CMP. It functions in the pathway isoprenoid biosynthesis; isopentenyl diphosphate biosynthesis via DXP pathway; isopentenyl diphosphate from 1-deoxy-D-xylulose 5-phosphate: step 4/6. Functionally, involved in the biosynthesis of isopentenyl diphosphate (IPP) and dimethylallyl diphosphate (DMAPP), two major building blocks of isoprenoid compounds. Catalyzes the conversion of 4-diphosphocytidyl-2-C-methyl-D-erythritol 2-phosphate (CDP-ME2P) to 2-C-methyl-D-erythritol 2,4-cyclodiphosphate (ME-CPP) with a corresponding release of cytidine 5-monophosphate (CMP). The sequence is that of 2-C-methyl-D-erythritol 2,4-cyclodiphosphate synthase from Deinococcus radiodurans (strain ATCC 13939 / DSM 20539 / JCM 16871 / CCUG 27074 / LMG 4051 / NBRC 15346 / NCIMB 9279 / VKM B-1422 / R1).